A 66-amino-acid polypeptide reads, in one-letter code: Large ribosomal subunit protein bL35 (66 aa).

A disordered region spans residues 20–41 (GKVMSAQRGKRHGMIKRTKKQI). Residues 27-41 (RGKRHGMIKRTKKQI) are compositionally biased toward basic residues.

This sequence belongs to the bacterial ribosomal protein bL35 family.

In Rhodopseudomonas palustris (strain BisB5), this protein is Large ribosomal subunit protein bL35.